The chain runs to 355 residues: Anthocyanin synthase (355 aa).

Substrate is bound by residues Y145 and K216. One can recognise a Fe2OG dioxygenase domain in the interval 211–310; that stretch reads LLLQMKINYY…RISWAVFCEP (100 aa). 218-220 serves as a coordination point for 2-oxoglutarate; sequence NYY. H235 is a binding site for Fe cation. Substrate is bound at residue T236. Residues D237 and H291 each coordinate Fe cation. 2-oxoglutarate-binding positions include R301 and 301–303; that span reads RIS. Positions 309 and 344 each coordinate substrate.

It belongs to the iron/ascorbate-dependent oxidoreductase family. L-ascorbate is required as a cofactor. It depends on Fe(2+) as a cofactor. In terms of tissue distribution, expressed in stems and leaves. Expressed at low levels in ovaries.

The catalysed reaction is a (2R,3S,4S)-leucoanthocyanidin + 2-oxoglutarate + O2 = a 4-H-anthocyanidin with a 3-hydroxy group + succinate + CO2 + 2 H2O. Its pathway is pigment biosynthesis; anthocyanin biosynthesis. Its function is as follows. Involved in anthocyanin biosynthesis by catalyzing the oxidation of leucoanthocyanidins into anthocyanidins. Required for the accumulation of anthocyanin in red-fleshed kiwifruit varieties. In Actinidia chinensis var. chinensis (Chinese soft-hair kiwi), this protein is Anthocyanin synthase.